A 271-amino-acid polypeptide reads, in one-letter code: 2,3,4,5-tetrahydropyridine-2,6-dicarboxylate N-succinyltransferase (271 aa).

Residues R102 and D139 each contribute to the substrate site.

Belongs to the transferase hexapeptide repeat family. In terms of assembly, homotrimer.

The protein resides in the cytoplasm. It catalyses the reaction (S)-2,3,4,5-tetrahydrodipicolinate + succinyl-CoA + H2O = (S)-2-succinylamino-6-oxoheptanedioate + CoA. It participates in amino-acid biosynthesis; L-lysine biosynthesis via DAP pathway; LL-2,6-diaminopimelate from (S)-tetrahydrodipicolinate (succinylase route): step 1/3. The sequence is that of 2,3,4,5-tetrahydropyridine-2,6-dicarboxylate N-succinyltransferase from Coxiella burnetii (strain RSA 331 / Henzerling II).